The sequence spans 228 residues: ATP-dependent dethiobiotin synthetase BioD (228 aa).

13-18 (DIGKTF) provides a ligand contact to ATP. T17 lines the Mg(2+) pocket. The active site involves K38. Residue S42 participates in substrate binding. Residues D55, 116-119 (EGSG), 179-180 (NK), and 208-210 (PKI) contribute to the ATP site. 2 residues coordinate Mg(2+): D55 and E116.

The protein belongs to the dethiobiotin synthetase family. In terms of assembly, homodimer. It depends on Mg(2+) as a cofactor.

It is found in the cytoplasm. The enzyme catalyses (7R,8S)-7,8-diammoniononanoate + CO2 + ATP = (4R,5S)-dethiobiotin + ADP + phosphate + 3 H(+). Its pathway is cofactor biosynthesis; biotin biosynthesis; biotin from 7,8-diaminononanoate: step 1/2. Its function is as follows. Catalyzes a mechanistically unusual reaction, the ATP-dependent insertion of CO2 between the N7 and N8 nitrogen atoms of 7,8-diaminopelargonic acid (DAPA, also called 7,8-diammoniononanoate) to form a ureido ring. This is ATP-dependent dethiobiotin synthetase BioD from Clostridium perfringens (strain ATCC 13124 / DSM 756 / JCM 1290 / NCIMB 6125 / NCTC 8237 / Type A).